Here is a 212-residue protein sequence, read N- to C-terminus: Adenylate kinase (212 aa).

14–19 (GSGKGT) is an ATP binding site. Positions 34 to 63 (STGDLFRKKISEDSQFAAQIQNYLSSGSYV) are NMP. AMP contacts are provided by residues Thr35, Arg40, 61 to 63 (SYV), 89 to 92 (GYPR), and Gln96. Residues 126–163 (QRLFCQKCQKSYNLLLAKPKNGLKCDLDNTDLITRNDD) form an LID region. Arg127 lines the ATP pocket. 2 residues coordinate Zn(2+): Cys130 and Cys133. An ATP-binding site is contributed by 136 to 137 (SY). Residues Cys150 and Asp153 each contribute to the Zn(2+) site. AMP contacts are provided by Arg160 and Arg171. Residue Gln199 participates in ATP binding.

Belongs to the adenylate kinase family. As to quaternary structure, monomer.

The protein localises to the cytoplasm. It carries out the reaction AMP + ATP = 2 ADP. It participates in purine metabolism; AMP biosynthesis via salvage pathway; AMP from ADP: step 1/1. Catalyzes the reversible transfer of the terminal phosphate group between ATP and AMP. Plays an important role in cellular energy homeostasis and in adenine nucleotide metabolism. This is Adenylate kinase from Mesomycoplasma hyopneumoniae (strain 7448) (Mycoplasma hyopneumoniae).